A 61-amino-acid polypeptide reads, in one-letter code: MSEKMLQVTQVRSVIGGTKKQKATIKALGLGRPNHKVQIKDNPCSRGQIRVVQHLVKVEEL.

The protein belongs to the universal ribosomal protein uL30 family. As to quaternary structure, part of the 50S ribosomal subunit.

This chain is Large ribosomal subunit protein uL30, found in Chlorobaculum parvum (strain DSM 263 / NCIMB 8327) (Chlorobium vibrioforme subsp. thiosulfatophilum).